The chain runs to 122 residues: Flagellar protein FliT (122 aa).

Residues 1–50 (MTSTVEFINRWQRIALLSQSLLELAQRGEWDLLLQQEVSYLQSIETVMEK) are required for homodimerization. The tract at residues 60–98 (IQDMVAGYIKQTLDNEQLLKGLLQQRLDELSSLIGQSTR) is fliD binding.

Belongs to the FliT family. Homodimer. Interacts with FliD and FlhC.

The protein resides in the cytoplasm. The protein localises to the cytosol. In terms of biological role, dual-function protein that regulates the transcription of class 2 flagellar operons and that also acts as an export chaperone for the filament-capping protein FliD. As a transcriptional regulator, acts as an anti-FlhDC factor; it directly binds FlhC, thus inhibiting the binding of the FlhC/FlhD complex to class 2 promoters, resulting in decreased expression of class 2 flagellar operons. As a chaperone, effects FliD transition to the membrane by preventing its premature polymerization, and by directing it to the export apparatus. This is Flagellar protein FliT from Salmonella gallinarum (strain 287/91 / NCTC 13346).